An 811-amino-acid polypeptide reads, in one-letter code: DEAD-box ATP-dependent RNA helicase 48 (811 aa).

Disordered stretches follow at residues methionine 1–leucine 32 and aspartate 93–leucine 138. The span at tryptophan 15–glutamate 29 shows a compositional bias: basic residues. Basic and acidic residues-rich tracts occupy residues glycine 95 to arginine 104 and glycine 117 to leucine 138. Residues arginine 286–serine 333 adopt a coiled-coil conformation. The Q motif motif lies at lysine 342–glutamate 370. One can recognise a Helicase ATP-binding domain in the interval leucine 373 to phenylalanine 556. Residue alanine 386–serine 393 coordinates ATP. The DEAD box signature appears at aspartate 504–aspartate 507. One can recognise a Helicase C-terminal domain in the interval lysine 570–isoleucine 740.

Belongs to the DEAD box helicase family.

It catalyses the reaction ATP + H2O = ADP + phosphate + H(+). The polypeptide is DEAD-box ATP-dependent RNA helicase 48 (Oryza sativa subsp. japonica (Rice)).